A 167-amino-acid polypeptide reads, in one-letter code: NADH-quinone oxidoreductase subunit B (167 aa).

[4Fe-4S] cluster contacts are provided by C40, C41, C105, and C135.

This sequence belongs to the complex I 20 kDa subunit family. In terms of assembly, NDH-1 is composed of 14 different subunits. Subunits NuoB, C, D, E, F, and G constitute the peripheral sector of the complex. [4Fe-4S] cluster is required as a cofactor.

The protein localises to the cell inner membrane. It carries out the reaction a quinone + NADH + 5 H(+)(in) = a quinol + NAD(+) + 4 H(+)(out). Its function is as follows. NDH-1 shuttles electrons from NADH, via FMN and iron-sulfur (Fe-S) centers, to quinones in the respiratory chain. The immediate electron acceptor for the enzyme in this species is believed to be ubiquinone. Couples the redox reaction to proton translocation (for every two electrons transferred, four hydrogen ions are translocated across the cytoplasmic membrane), and thus conserves the redox energy in a proton gradient. The sequence is that of NADH-quinone oxidoreductase subunit B from Magnetococcus marinus (strain ATCC BAA-1437 / JCM 17883 / MC-1).